The primary structure comprises 272 residues: Dermonecrotic toxin StSicTox-betaIC1 (272 aa).

Residue histidine 5 is part of the active site. Glutamate 25 and aspartate 27 together coordinate Mg(2+). The active-site Nucleophile is the histidine 41. Cystine bridges form between cysteine 45-cysteine 51 and cysteine 47-cysteine 191. Aspartate 85 contributes to the Mg(2+) binding site.

This sequence belongs to the arthropod phospholipase D family. Class II subfamily. Class IIb sub-subfamily. The cofactor is Mg(2+). Expressed by the venom gland.

Its subcellular location is the secreted. The catalysed reaction is an N-(acyl)-sphingosylphosphocholine = an N-(acyl)-sphingosyl-1,3-cyclic phosphate + choline. The enzyme catalyses N-hexanoyl-sphing-4-enine-1-phosphocholine = N-(hexanoyl)-sphing-4-enine-1,3-cyclic phosphate + choline. It carries out the reaction an N-(acyl)-sphingosylphosphoethanolamine = an N-(acyl)-sphingosyl-1,3-cyclic phosphate + ethanolamine. It catalyses the reaction N-dodecanoyl-heptadecasphing-4-enine-1-phosphoethanolamine = N-dodecanoyl-heptadecasphing-4-enine-1,3-cyclic phosphate + ethanolamine. The catalysed reaction is a 1-acyl-sn-glycero-3-phosphoethanolamine = a 1-acyl-sn-glycero-2,3-cyclic phosphate + ethanolamine. The enzyme catalyses 1-tetradecanoyl-sn-glycero-3-phosphoethanolamine = 1-tetradecanoyl-sn-glycero-2,3-cyclic phosphate + ethanolamine. Functionally, dermonecrotic toxins cleave the phosphodiester linkage between the phosphate and headgroup of certain phospholipids (sphingolipid and lysolipid substrates), forming an alcohol (often choline) and a cyclic phosphate. This toxin acts on lysophosphatidylethanolamine (LPE) and ceramide phosphoethanolamine (CPE) with high activity. This toxin acts on sphingomyelin (SM) with very low activity and is not active on lysophosphatidylserine (LPS), lysophosphatidylcholine (LPC) and lysophosphatidylglycerol (LPG). It acts by transphosphatidylation, releasing exclusively cyclic phosphate as second products. It is not surprising that spider toxins have affinity for ethanolamine-containing sphingolipids since they are common in insect prey. Induces dermonecrosis, hemolysis, increased vascular permeability, edema, inflammatory response, and platelet aggregation. This is Dermonecrotic toxin StSicTox-betaIC1 from Sicarius terrosus (Cave spider).